The following is an 855-amino-acid chain: DNA mismatch repair protein MutS (855 aa).

616–623 provides a ligand contact to ATP; sequence GPNMGGKS.

It belongs to the DNA mismatch repair MutS family.

In terms of biological role, this protein is involved in the repair of mismatches in DNA. It is possible that it carries out the mismatch recognition step. This protein has a weak ATPase activity. In Salmonella gallinarum (strain 287/91 / NCTC 13346), this protein is DNA mismatch repair protein MutS.